Reading from the N-terminus, the 404-residue chain is Corticosteroid-binding globulin (404 aa).

The N-terminal stretch at 1–22 is a signal peptide; that stretch reads MLPTLYTCLLWLSTSGLWTVQA. N-linked (GlcNAc...) asparagine glycans are attached at residues Asn-95, Asn-119, and Asn-175. Gln-253 contacts cortisol. Asn-259 is a glycosylation site (N-linked (GlcNAc...) asparagine). Gln-285 contacts cortisol. N-linked (GlcNAc...) asparagine glycosylation occurs at Asn-326. Trp-392 provides a ligand contact to cortisol.

Belongs to the serpin family. Post-translationally, glycosylation in position Asn-259 is needed for steroid binding.

The protein localises to the secreted. Its function is as follows. Major transport protein for glucocorticoids and progestins in the blood of almost all vertebrate species. The protein is Corticosteroid-binding globulin (SERPINA6) of Bos taurus (Bovine).